A 544-amino-acid polypeptide reads, in one-letter code: Ribosomal protein S6 kinase-like 1 (544 aa).

The MIT domain maps to 87 to 115; the sequence is VHVDPNKERREAVKLKITKYLRRAEEIFN. A Protein kinase domain is found at 145–534; that stretch reads SALEQLKGCR…TSRLKSHPFF (390 aa). Residues 151 to 159 and Lys-177 each bind ATP; that span reads KGCRVVGII. 2 disordered regions span residues 262 to 344 and 353 to 372; these read PAEL…HWVR and AYGRGRGRNPPSANRASLGS. Polar residues predominate over residues 303 to 313; sequence SRPSAVFSSDP. Asp-407 functions as the Proton acceptor in the catalytic mechanism.

Belongs to the protein kinase superfamily. Ser/Thr protein kinase family. S6 kinase subfamily.

It catalyses the reaction L-seryl-[protein] + ATP = O-phospho-L-seryl-[protein] + ADP + H(+). The catalysed reaction is L-threonyl-[protein] + ATP = O-phospho-L-threonyl-[protein] + ADP + H(+). This Mus musculus (Mouse) protein is Ribosomal protein S6 kinase-like 1 (Rps6kl1).